The primary structure comprises 107 residues: CLAVATA3/ESR (CLE)-related protein 10 (107 aa).

Positions 1–23 are cleaved as a signal peptide; the sequence is MKTNRNRPINILIVFFLLTTARA. Residues N27 and N30 are each glycosylated (N-linked (GlcNAc...) asparagine). The interval 73–107 is disordered; that stretch reads SRQPLFSPPPPPTEIDQRYGVEKRLVPSGPNPLHN. Positions 87–97 are enriched in basic and acidic residues; the sequence is IDQRYGVEKRL. A hydroxyproline mark is found at P99 and P102. The O-linked (Ara...) hydroxyproline glycan is linked to P102.

It belongs to the CLV3/ESR signal peptide family. In terms of processing, the O-glycosylation (arabinosylation) of the hydroxyproline Pro-102 enhances binding affinity of the CLE10p peptide for its receptor. In terms of tissue distribution, expressed in stems, apex, leaves, flowers, siliques and pollen.

Its subcellular location is the secreted. It is found in the extracellular space. Its function is as follows. Extracellular signal peptide that regulates cell fate. Represses root apical meristem maintenance. Regulates the transition of protophloem cells from proliferation to differentiation, thus impinging on postembryonic growth capacity of the root meristem; this signaling pathway requires CRN and CLV2. In Arabidopsis thaliana (Mouse-ear cress), this protein is CLAVATA3/ESR (CLE)-related protein 10.